A 195-amino-acid polypeptide reads, in one-letter code: CASP-like protein IN26 (195 aa).

The Cytoplasmic segment spans residues 1 to 26; that stretch reads VAPTGSVETEKAGPSYKPKEYYKVTE. Residues 27 to 47 form a helical membrane-spanning segment; the sequence is AILRLLLLASLVVAVVVMVTS. Residues 48-75 lie on the Extracellular side of the membrane; sequence KETELISVKLDPFPPFMLPLTAKFTQSP. Residues 76–96 traverse the membrane as a helical segment; it reads AFIYFVAGLSVAGLYTIISTL. The Cytoplasmic portion of the chain corresponds to 97–120; sequence ASFYNLLIKPGFCPALVSHFIILD. The helical transmembrane segment at 121–143 threads the bilayer; sequence VVMLGIVGTATGAAGGVAYIGLK. Over 144–163 the chain is Extracellular; sequence GNSHVGWTKVCNKYGKLCTH. Residues 164–184 form a helical membrane-spanning segment; the sequence is LGASLAVSFFAFIVLLLLIIL. The Cytoplasmic segment spans residues 185–195; it reads SIHSLSKKIPK.

The protein belongs to the Casparian strip membrane proteins (CASP) family. As to quaternary structure, homodimer and heterodimers.

The protein resides in the cell membrane. The protein is CASP-like protein IN26 (IN26) of Ipomoea nil (Japanese morning glory).